A 139-amino-acid polypeptide reads, in one-letter code: MAVCIAVIAKENYPLYIRSTPTENELKFHYMVHTSLDVVDEKISAMGKALVDQRELYLGLLYPTEDYKVYGYVTNSKVKFVMVVDSSNTALRDNEIRSMFRKLHNSYTDVMCNPFYNPGDRIQSRAFDTMVTSMMVQVC.

This sequence belongs to the TRAPP small subunits family. Sedlin subfamily. In terms of assembly, component of the multisubunit TRAPP (transport protein particle) complex, which includes at least TRAPPC2, TRAPPC2L, TRAPPC3, TRAPPC3L, TRAPPC4, TRAPPC5, TRAPPC8, TRAPPC9, TRAPPC10, TRAPPC11 and TRAPPC12. Interacts with the heterodimer TRAPPC3-TRAPPC6A.

Its subcellular location is the cytoplasm. The protein localises to the perinuclear region. It localises to the endoplasmic reticulum. It is found in the golgi apparatus. Functionally, may play a role in vesicular transport from endoplasmic reticulum to Golgi. This chain is Trafficking protein particle complex subunit 2-like protein (Trappc2l), found in Rattus norvegicus (Rat).